We begin with the raw amino-acid sequence, 366 residues long: Outer membrane porin C 2 (366 aa).

The signal sequence occupies residues 1-21 (MKLKIVAVVVTGLLAANVAHA).

It belongs to the Gram-negative porin family. As to quaternary structure, homotrimer. Forms mixed heterotrimers with OmpF and with PhoE; other mixed heterotrimers are also probable.

It localises to the cell outer membrane. Forms pores that allow passive diffusion of small molecules across the outer membrane. Plays a role in virulence. The chain is Outer membrane porin C 2 from Shigella flexneri serotype 5a (strain M90T).